Here is a 37-residue protein sequence, read N- to C-terminus: Large ribosomal subunit protein bL36 (37 aa).

It belongs to the bacterial ribosomal protein bL36 family.

This Ureaplasma urealyticum serovar 10 (strain ATCC 33699 / Western) protein is Large ribosomal subunit protein bL36.